The primary structure comprises 502 residues: ATP synthase subunit alpha (502 aa).

G169–T176 is a binding site for ATP.

It belongs to the ATPase alpha/beta chains family. In terms of assembly, F-type ATPases have 2 components, CF(1) - the catalytic core - and CF(0) - the membrane proton channel. CF(1) has five subunits: alpha(3), beta(3), gamma(1), delta(1), epsilon(1). CF(0) has three main subunits: a(1), b(2) and c(9-12). The alpha and beta chains form an alternating ring which encloses part of the gamma chain. CF(1) is attached to CF(0) by a central stalk formed by the gamma and epsilon chains, while a peripheral stalk is formed by the delta and b chains.

The protein localises to the cell inner membrane. The catalysed reaction is ATP + H2O + 4 H(+)(in) = ADP + phosphate + 5 H(+)(out). Produces ATP from ADP in the presence of a proton gradient across the membrane. The alpha chain is a regulatory subunit. In Desulfovibrio desulfuricans (strain ATCC 27774 / DSM 6949 / MB), this protein is ATP synthase subunit alpha.